The chain runs to 437 residues: O-methyltransferase elcB (437 aa).

D269 lines the S-adenosyl-L-methionine pocket. Residue H319 is the Proton acceptor of the active site.

Belongs to the class I-like SAM-binding methyltransferase superfamily. Cation-independent O-methyltransferase family. COMT subfamily.

It functions in the pathway secondary metabolite biosynthesis. O-methyltransferase; part of the gene cluster that mediates the biosynthesis of elsinochrome C, a perelyenequinone phytotoxin structurally similar to cercosporin. The first step of elsinochrome C biosynthesis is performed by the polyketide synthase elcA which catalyzes the formation of nor-toralactone. The starter unit acyltransferase (SAT) domain of elcA initiates polyketide extension by the selective utilization of acetyl-CoA, which is elongated to the heptaketide in the beta-ketoacyl synthase (KS) domain by successive condensations with six malonyl units introduced by the malonyl acyltransferase (MAT) domain. The product template (PT) domain catalyzes C4-C9 and C2-C11 aldol cyclizations and dehydrations to a trihydroxynaphthalene, which is thought to be delivered to the thioesterase (TE) domain for product release. The bifunctional enzyme elcB then methylates nor-toralactone to toralactone before conducting an unusual oxidative aromatic ring opening. The next step in perylenequinone biosynthesis is an O-methylation at the nascent OH-6 of the elcB product performed by the O-methyltransferase elcD. The oxidative coupling of the two monomeric naphthol units in perylenequinone biosynthesis is catalyzed by the FAD-dependent monooxygenase elcE and the multicopper oxidase elcG. ElcG might catalyze the first intermolecular coupling in a regio- and stereo-selective manner via a phenol radical coupling mechanism and the elcE could forge the second C-C bond intramolecularly via a hydride transfer mechanism. The fasciclin domain-containing protein elcF might also play a role duting this step. The last piece of the puzzle in the biosynthesis of elsinochrome C is the additional annulation by enolate coupling to afford the dihydrobenzo(ghi)perylenequinone system, catalyzed by the FAD-dependent monooxygenase elcH. This is O-methyltransferase elcB from Phaeosphaeria nodorum (strain SN15 / ATCC MYA-4574 / FGSC 10173) (Glume blotch fungus).